Here is a 418-residue protein sequence, read N- to C-terminus: Mitochondrial outer membrane protein SLC25A46 (418 aa).

Phosphoserine occurs at positions 32 and 35. Thr45 is modified (phosphothreonine). Residues 46 to 96 (PPDIPGSRNLHWGEKSPSYGVPSAPPTLEGPAEEPFPGGGDGPRPGRSSEQ) are disordered. Residues 96–187 (QLNRFAGFGI…GIISEFTPLP (92 aa)) form a Solcar 1 repeat. Transmembrane regions (helical) follow at residues 103-123 (FGIG…CIVL), 167-187 (FIVQ…TPLP), 202-222 (HLLL…ASLI), 258-278 (LLPL…HYII), 314-334 (FPEL…LYPL), and 382-402 (VFGF…HATI). One copy of the Solcar 2 repeat lies at 311–416 (DAYFPELIAN…KIIYSTLLQN (106 aa)).

The protein belongs to the mitochondrial carrier (TC 2.A.29) family. In terms of assembly, associates with the mitochondrial contact site and cristae organizing system (MICOS) complex. May associate with the endoplasmic reticulum membrane protein complex (EMC). As to expression, widely expressed. Highly expressed in hindbrain, spinal cord and brain coronal sections containing corpus callosum, fornix, optic chiasm, thalamus, hypothalamus, midbrain, pons and cerebellum.

The protein localises to the mitochondrion outer membrane. Functionally, transmembrane protein of the mitochondrial outer membrane that controls mitochondrial organization. May regulate the assembly of the MICOS (mitochondrial contact site and cristae organizing system) complex which is essential to the biogenesis and dynamics of mitochondrial cristae, the inwards folds of the inner mitochondrial membrane. Through its interaction with the EMC (endoplasmic reticulum membrane protein complex), could regulate mitochondrial lipid homeostasis and thereby mitochondrial fission. The chain is Mitochondrial outer membrane protein SLC25A46 from Rattus norvegicus (Rat).